We begin with the raw amino-acid sequence, 143 residues long: Large ribosomal subunit protein uL13 (143 aa).

The protein belongs to the universal ribosomal protein uL13 family. Part of the 50S ribosomal subunit.

This protein is one of the early assembly proteins of the 50S ribosomal subunit, although it is not seen to bind rRNA by itself. It is important during the early stages of 50S assembly. The chain is Large ribosomal subunit protein uL13 from Albidiferax ferrireducens (strain ATCC BAA-621 / DSM 15236 / T118) (Rhodoferax ferrireducens).